Reading from the N-terminus, the 91-residue chain is MARSLKKGPFVDHHLVAKVEKAVAIKDKKPIKTWSRRSTILPDFIGLTIAVHNGKQHVPVYVTDQMVGHKLGEFALTRTFKGHPADKKAKK.

The protein belongs to the universal ribosomal protein uS19 family.

Protein S19 forms a complex with S13 that binds strongly to the 16S ribosomal RNA. The chain is Small ribosomal subunit protein uS19 from Methylibium petroleiphilum (strain ATCC BAA-1232 / LMG 22953 / PM1).